The primary structure comprises 343 residues: UDP-3-O-acylglucosamine N-acyltransferase 2 (343 aa).

His251 serves as the catalytic Proton acceptor.

This sequence belongs to the transferase hexapeptide repeat family. LpxD subfamily. Homotrimer.

It catalyses the reaction a UDP-3-O-[(3R)-3-hydroxyacyl]-alpha-D-glucosamine + a (3R)-hydroxyacyl-[ACP] = a UDP-2-N,3-O-bis[(3R)-3-hydroxyacyl]-alpha-D-glucosamine + holo-[ACP] + H(+). The protein operates within bacterial outer membrane biogenesis; LPS lipid A biosynthesis. Its function is as follows. Catalyzes the N-acylation of UDP-3-O-acylglucosamine using 3-hydroxyacyl-ACP as the acyl donor. Is involved in the biosynthesis of lipid A, a phosphorylated glycolipid that anchors the lipopolysaccharide to the outer membrane of the cell. This Legionella pneumophila subsp. pneumophila (strain Philadelphia 1 / ATCC 33152 / DSM 7513) protein is UDP-3-O-acylglucosamine N-acyltransferase 2.